The chain runs to 109 residues: MSITDILSADDIAAALQECQDPDTFEPQKFFQTSGLSKMSASQLKDIFQFIDNDQSGYLDEDELKYFLQRFQSDARELTESETKSLMDAADNDGDGKIGADEFQEMVHS.

Serine 2 is subject to N-acetylserine. EF-hand domains are found at residues 39 to 74 (MSAS…FQSD) and 78 to 109 (LTES…MVHS). The Ca(2+) site is built by aspartate 52, aspartate 54, serine 56, tyrosine 58, glutamate 63, aspartate 91, aspartate 93, aspartate 95, lysine 97, and glutamate 102. Residues 82-109 (ETKSLMDAADNDGDGKIGADEFQEMVHS) form a disordered region. The span at 94-109 (GDGKIGADEFQEMVHS) shows a compositional bias: basic and acidic residues.

It belongs to the parvalbumin family. In terms of tissue distribution, found in tumor tissues and not detected in normal tissues.

Its function is as follows. Has some calmodulin-like activity with respect to enzyme activation and growth regulation. Binds two calcium ions. In Mus musculus (Mouse), this protein is Oncomodulin (Ocm).